Consider the following 47-residue polypeptide: Large ribosomal subunit protein bL33 (47 aa).

This sequence belongs to the bacterial ribosomal protein bL33 family.

The sequence is that of Large ribosomal subunit protein bL33 from Staphylococcus saprophyticus.